The chain runs to 302 residues: Myb-related protein Hv33 (302 aa).

2 consecutive HTH myb-type domains span residues 11–63 and 64–118; these read QPKV…INYL and RPDL…KKKL. 2 DNA-binding regions (H-T-H motif) span residues 39–63 and 91–114; these read WSSVPRLAALNRCGKSCRLRWINYL and WSQIASHLPGRTDNEIKNFWNSCI. The tract at residues 137–158 is disordered; the sequence is ATAAAALPDAEEEDRKPLCPAV.

As to expression, germinating seed and apical meristem of shoot and root.

It localises to the nucleus. Functionally, possible transcription activator in response to an external signal. May be involved in the regulation of flavonoid biosynthesis. This Hordeum vulgare (Barley) protein is Myb-related protein Hv33 (MYB2).